An 83-amino-acid polypeptide reads, in one-letter code: MKTLLLTLLVVTIVCLDLGYTLECHNQQSSETPTTTGCSGGETNCYKKSWRDHRGYRIERGCGCPSVKKGIEINCCTTDRCNN.

The N-terminal stretch at 1–21 is a signal peptide; sequence MKTLLLTLLVVTIVCLDLGYT. Intrachain disulfides connect cysteine 24–cysteine 45, cysteine 38–cysteine 62, cysteine 64–cysteine 75, and cysteine 76–cysteine 81.

Belongs to the three-finger toxin family. Short-chain subfamily. Type I alpha-neurotoxin sub-subfamily. As to expression, expressed by the venom gland.

It is found in the secreted. In terms of biological role, binds to muscle nicotinic acetylcholine receptor (nAChR) and inhibit acetylcholine from binding to the receptor, thereby impairing neuromuscular transmission. The polypeptide is Alpha-neurotoxin NTX-1 (Naja sputatrix (Malayan spitting cobra)).